A 339-amino-acid polypeptide reads, in one-letter code: Annexin A2 (339 aa).

Residue Ser2 is modified to N-acetylserine. Residues 2–24 form an S100A10-binding site region; the sequence is STVHEILCKLSLEGDHSTPPSAY. The residue at position 24 (Tyr24) is a Phosphotyrosine; by SRC. Ser26 carries the post-translational modification Phosphoserine; by PKC. 2 Annexin repeats span residues 33-104 and 105-176; these read FDAE…GLLK and TPAQ…ALAK. Lys49 is modified (N6-acetyllysine; alternate). Residue Lys49 forms a Glycyl lysine isopeptide (Lys-Gly) (interchain with G-Cter in SUMO1); alternate linkage. Lys49 participates in a covalent cross-link: Glycyl lysine isopeptide (Lys-Gly) (interchain with G-Cter in SUMO2); alternate. Lys152 is modified (N6-acetyllysine). At Ser184 the chain carries Phosphoserine. Annexin repeat units follow at residues 189–261 and 265–336; these read ELID…NLVQ and NKPL…YLCG. Tyr199 carries the phosphotyrosine modification. Residue Lys227 is modified to N6-acetyllysine.

Belongs to the annexin family. In terms of assembly, heterotetramer containing 2 light chains of S100A10/p11 and 2 heavy chains of ANXA2/p36. Interacts with ATP1B1. Interacts with DYSF. Interacts with COCH. Interacts (via repeat Annexin 1) with PCSK9 (via the C-terminal domain); the interaction inhibits the degradation of LDLR. Interacts with CEACAM1 (via the cytoplasmic domain); this interaction is regulated by phosphorylation of CEACAM1. Interacts with APPL2 and APPL1; targets APPL2 to endosomes and acting in parallel to RAB5A. Interacts with S100A4. May interact with UBAP2. Interacts with PLEKHG4B; this interaction is required for PLEKHG4B localization to cell-cell adhesions. ISGylated.

It is found in the secreted. Its subcellular location is the extracellular space. The protein resides in the extracellular matrix. It localises to the basement membrane. The protein localises to the melanosome. Functionally, calcium-regulated membrane-binding protein whose affinity for calcium is greatly enhanced by anionic phospholipids. It binds two calcium ions with high affinity. May be involved in heat-stress response. Inhibits PCSK9-enhanced LDLR degradation, probably reduces PCSK9 protein levels via a translational mechanism but also competes with LDLR for binding with PCSK9. Binds to endosomes damaged by phagocytosis of particulate wear debris and participates in endosomal membrane stabilization, thereby limiting NLRP3 inflammasome activation. Required for endothelial cell surface plasmin generation and may support fibrinolytic surveillance and neoangiogenesis. This chain is Annexin A2 (ANXA2), found in Bos taurus (Bovine).